Consider the following 595-residue polypeptide: Leiomodin-1 (595 aa).

Disordered stretches follow at residues 1–322 (MSKV…KVKN) and 467–568 (DKQR…QEKN). At Ser-12 the chain carries Phosphoserine. The span at 27 to 40 (EEMEELEKELDVVD) shows a compositional bias: acidic residues. 8 stretches are compositionally biased toward basic and acidic residues: residues 72 to 105 (CEKESKKIIQREMSVDESKQVGRKTDAKNGEDKG), 117 to 127 (QDSDVGKEPKK), 134 to 193 (FSRD…EKTG), 201 to 224 (SRDKDKKREEVKEPSKKEEVKLTA), 232 to 251 (RQEDGKQKESREDRDKKPEV), 259 to 289 (RDSRKEDEKVKKEETQPDKGVREEGKTREKQ), 467 to 476 (DKQRQKRLQE), and 484 to 493 (SGEKKDRLEV). Ser-85 is subject to Phosphoserine. A Phosphoserine modification is found at Ser-135. 8 tandem repeats follow at residues 165–180 (AAVDRKEAGKDGREER), 181–196 (AAATTKKEEEKTGSVR), 197–212 (NAGLSRDKDKKREEVK), 213–227 (EPSKKEEVKLTAENR), 228–243 (STVGRQEDGKQKESRE), 244–257 (DRDKKPEVKGIGCG), 258–273 (SRDSRKEDEKVKKEET), and 274–288 (QPDKGVREEGKTREK). The interval 165 to 288 (AAVDRKEAGK…VREEGKTREK (124 aa)) is 8 X approximate tandem repeats. Pro residues-rich tracts occupy residues 503 to 513 (SPKPSPQPSPK) and 527 to 538 (AAPPPPPPPLAP). Positions 503 to 522 (SPKPSPQPSPKSAPKNSPKK) are 5 X 4 AA approximate tandem repeats. A Phosphoserine modification is found at Ser-550. The 20-residue stretch at 569–588 (SRDQLLAAIRSSNLKQLKKV) folds into the WH2 domain.

As to expression, detected in smooth muscle, in stomach and uterus, blood vessel wall, and in slow fibers in extraocular muscle, urinary bladder and sternothyroid muscle (at protein level).

It is found in the cytoplasm. Its subcellular location is the myofibril. The protein localises to the sarcomere. It localises to the cytoskeleton. Required for proper contractility of visceral smooth muscle cells. Mediates nucleation of actin filaments. In Rattus norvegicus (Rat), this protein is Leiomodin-1.